Reading from the N-terminus, the 254-residue chain is Coenzyme F420:L-glutamate ligase (254 aa).

GTP is bound by residues 11 to 14, 40 to 41, and lysine 45; these read IPLI and ST. Aspartate 109 is a binding site for a divalent metal cation. GTP is bound at residue asparagine 112. Aspartate 150, threonine 151, and glutamate 208 together coordinate a divalent metal cation. Residue 206–213 participates in GTP binding; that stretch reads MGEGAGGI.

Belongs to the CofE family. In terms of assembly, homodimer. It depends on Mg(2+) as a cofactor. Requires Mn(2+) as cofactor. K(+) serves as cofactor.

It carries out the reaction oxidized coenzyme F420-0 + GTP + L-glutamate = oxidized coenzyme F420-1 + GDP + phosphate + H(+). It catalyses the reaction oxidized coenzyme F420-1 + GTP + L-glutamate = oxidized coenzyme F420-2 + GDP + phosphate + H(+). Its pathway is cofactor biosynthesis; coenzyme F420 biosynthesis. Functionally, catalyzes the GTP-dependent successive addition of two or more gamma-linked L-glutamates to the L-lactyl phosphodiester of 7,8-didemethyl-8-hydroxy-5-deazariboflavin (F420-0) to form coenzyme F420-0-glutamyl-glutamate (F420-2) or polyglutamated F420 derivatives. The polypeptide is Coenzyme F420:L-glutamate ligase (Methanosarcina mazei (strain ATCC BAA-159 / DSM 3647 / Goe1 / Go1 / JCM 11833 / OCM 88) (Methanosarcina frisia)).